The primary structure comprises 297 residues: Bifunctional protein FolD 2 (297 aa).

Residues 164 to 166 (GRS), serine 193, and isoleucine 234 contribute to the NADP(+) site.

This sequence belongs to the tetrahydrofolate dehydrogenase/cyclohydrolase family. In terms of assembly, homodimer.

It catalyses the reaction (6R)-5,10-methylene-5,6,7,8-tetrahydrofolate + NADP(+) = (6R)-5,10-methenyltetrahydrofolate + NADPH. It carries out the reaction (6R)-5,10-methenyltetrahydrofolate + H2O = (6R)-10-formyltetrahydrofolate + H(+). The protein operates within one-carbon metabolism; tetrahydrofolate interconversion. In terms of biological role, catalyzes the oxidation of 5,10-methylenetetrahydrofolate to 5,10-methenyltetrahydrofolate and then the hydrolysis of 5,10-methenyltetrahydrofolate to 10-formyltetrahydrofolate. This Haloarcula marismortui (strain ATCC 43049 / DSM 3752 / JCM 8966 / VKM B-1809) (Halobacterium marismortui) protein is Bifunctional protein FolD 2.